Consider the following 354-residue polypeptide: Opsin-1, short-wave-sensitive 2 (354 aa).

Over methionine 1–valine 43 the chain is Extracellular. The N-linked (GlcNAc...) asparagine glycan is linked to asparagine 24. A helical membrane pass occupies residues phenylalanine 44 to cysteine 68. The Cytoplasmic portion of the chain corresponds to threonine 69–asparagine 80. A helical membrane pass occupies residues tyrosine 81–tyrosine 106. The Extracellular segment spans residues lysine 107–glutamate 120. Cysteine 117 and cysteine 194 are oxidised to a cystine. A helical membrane pass occupies residues glycine 121–leucine 140. The Cytoplasmic segment spans residues glutamate 141–histidine 159. Residues alanine 160–serine 183 traverse the membrane as a helical segment. Residues arginine 184 to serine 209 lie on the Extracellular side of the membrane. Asparagine 207 is a glycosylation site (N-linked (GlcNAc...) asparagine). Residues tyrosine 210–leucine 237 traverse the membrane as a helical segment. Residues lysine 238–lysine 259 lie on the Cytoplasmic side of the membrane. The helical transmembrane segment at methionine 260 to valine 283 threads the bilayer. Over serine 284–aspartate 291 the chain is Extracellular. The helical transmembrane segment at leucine 292–methionine 316 threads the bilayer. The residue at position 303 (lysine 303) is an N6-(retinylidene)lysine. Topologically, residues asparagine 317–lysine 354 are cytoplasmic.

It belongs to the G-protein coupled receptor 1 family. Opsin subfamily. Phosphorylated on some or all of the serine and threonine residues present in the C-terminal region. In terms of tissue distribution, retinal long single cone outer segments.

The protein localises to the membrane. Its function is as follows. Visual pigments are the light-absorbing molecules that mediate vision. They consist of an apoprotein, opsin, covalently linked to cis-retinal. This Danio rerio (Zebrafish) protein is Opsin-1, short-wave-sensitive 2 (opn1sw2).